Here is a 579-residue protein sequence, read N- to C-terminus: uncharacterized protein (579 aa).

The next 12 membrane-spanning stretches (helical) occupy residues 20 to 40 (ALWA…VVAI), 54 to 74 (ATVV…MLVA), 86 to 106 (LYLI…LSSG), 142 to 162 (GVAL…GPLA), 174 to 194 (WIFF…AYLI), 204 to 224 (FDWF…FGLQ), 234 to 254 (WIWA…YWQA), 279 to 299 (IAII…YAQA), 310 to 330 (VLFA…GMII), 335 to 355 (PLCV…WLLC), 366 to 386 (LVLP…PLTV), and 467 to 487 (MLLP…LVDF). Positions 516 to 579 (REPEEDCDTQ…DTESTAPSAL (64 aa)) are disordered. Low complexity predominate over residues 526 to 540 (PLRASRPAAAAASRS). The segment covering 570 to 579 (DTESTAPSAL) has biased composition (polar residues).

It belongs to the major facilitator superfamily. EmrB family.

Its subcellular location is the cell membrane. This is an uncharacterized protein from Mycobacterium tuberculosis (strain ATCC 25618 / H37Rv).